A 478-amino-acid polypeptide reads, in one-letter code: Probable L-ascorbate peroxidase 8, chloroplastic (478 aa).

Residues 1-13 (MAERIAASLLPAA) show a composition bias toward low complexity. 2 disordered regions span residues 1-31 (MAER…VSAA) and 44-66 (GGLR…RSGR). The transit peptide at 1-76 (MAERIAASLL…AGAGARAVVR (76 aa)) directs the protein to the chloroplast. Residues 14–26 (SPSPAPSPPPPRP) are compositionally biased toward pro residues. H117 (proton acceptor) is an active-site residue. A disordered region spans residues 245–276 (AHTLGRSRPDRSGWGKPETKYTKDGPGEPGGQ). Position 246 (H246) interacts with heme b. A K(+)-binding site is contributed by T247. Positions 251 to 270 (SRPDRSGWGKPETKYTKDGP) are enriched in basic and acidic residues. Positions 279 and 286 each coordinate K(+). Residues 346-417 (AKFDPPEGFS…DNNGAAPQPE (72 aa)) are disordered. The span at 369 to 381 (PAPAPAAAPPPPP) shows a compositional bias: pro residues. Over residues 394 to 406 (PVTVGAAVASSPA) the composition is skewed to low complexity. The chain crosses the membrane as a helical span at residues 458–478 (YFLNIMLLIGGLAFLTSLLGS).

This sequence belongs to the peroxidase family. Ascorbate peroxidase subfamily. In terms of assembly, interacts with SWEET11/OS8N3. Heme b is required as a cofactor. Expressed in roots, leaves, stems and flowers. Expressed in leaves, shoots and panicles. Expressed at low levels in roots.

It localises to the plastid. The protein resides in the chloroplast thylakoid membrane. It catalyses the reaction L-ascorbate + H2O2 = L-dehydroascorbate + 2 H2O. Functionally, involved in defense response and tolerance to the bacterial pathogen Xanthomonas oryzae pv. oryzae (Xoo). Plays an important role in hydrogen peroxide removal during infection by Xoo. Involved in response to abiotic stress. Plays a role in hydrogen peroxide removal durings salt stress. This Oryza sativa subsp. japonica (Rice) protein is Probable L-ascorbate peroxidase 8, chloroplastic.